The sequence spans 453 residues: Bifunctional protein GlmU (453 aa).

The segment at 1 to 226 (MKFSAVILAA…AIEVEGVNDR (226 aa)) is pyrophosphorylase. Residues 8–11 (LAAG), Lys22, Gln73, 78–79 (GT), 100–102 (YGD), Gly137, Glu151, Asn166, and Asn224 each bind UDP-N-acetyl-alpha-D-glucosamine. A Mg(2+)-binding site is contributed by Asp102. Asn224 is a binding site for Mg(2+). The tract at residues 227 to 247 (AQLARLERAFQSMQAQKLLEQ) is linker. The segment at 248–453 (GVMLRDPARF…TGWQRPVKQK (206 aa)) is N-acetyltransferase. Positions 330 and 348 each coordinate UDP-N-acetyl-alpha-D-glucosamine. The active-site Proton acceptor is the His360. UDP-N-acetyl-alpha-D-glucosamine-binding residues include Tyr363 and Asn374. Acetyl-CoA-binding positions include Ala377, 383-384 (NY), Ser402, Ala420, and Arg437.

The protein in the N-terminal section; belongs to the N-acetylglucosamine-1-phosphate uridyltransferase family. In the C-terminal section; belongs to the transferase hexapeptide repeat family. As to quaternary structure, homotrimer. Mg(2+) is required as a cofactor.

Its subcellular location is the cytoplasm. It catalyses the reaction alpha-D-glucosamine 1-phosphate + acetyl-CoA = N-acetyl-alpha-D-glucosamine 1-phosphate + CoA + H(+). It carries out the reaction N-acetyl-alpha-D-glucosamine 1-phosphate + UTP + H(+) = UDP-N-acetyl-alpha-D-glucosamine + diphosphate. It participates in nucleotide-sugar biosynthesis; UDP-N-acetyl-alpha-D-glucosamine biosynthesis; N-acetyl-alpha-D-glucosamine 1-phosphate from alpha-D-glucosamine 6-phosphate (route II): step 2/2. The protein operates within nucleotide-sugar biosynthesis; UDP-N-acetyl-alpha-D-glucosamine biosynthesis; UDP-N-acetyl-alpha-D-glucosamine from N-acetyl-alpha-D-glucosamine 1-phosphate: step 1/1. Its pathway is bacterial outer membrane biogenesis; LPS lipid A biosynthesis. In terms of biological role, catalyzes the last two sequential reactions in the de novo biosynthetic pathway for UDP-N-acetylglucosamine (UDP-GlcNAc). The C-terminal domain catalyzes the transfer of acetyl group from acetyl coenzyme A to glucosamine-1-phosphate (GlcN-1-P) to produce N-acetylglucosamine-1-phosphate (GlcNAc-1-P), which is converted into UDP-GlcNAc by the transfer of uridine 5-monophosphate (from uridine 5-triphosphate), a reaction catalyzed by the N-terminal domain. The protein is Bifunctional protein GlmU of Vibrio parahaemolyticus serotype O3:K6 (strain RIMD 2210633).